Consider the following 453-residue polypeptide: MDIEEVIEEALQKIVPKEEEERFVKTLMSEIEEKARETIEELNLNAKPYFVGSLAKNTYLAGDHDLDLFIAFPLDTSLEKLREKGLEAGKVLGKKLGRYELAYAEHPYVRAEYKGVKVDIVPCYDVKSWKDVRTAVDRSILHTKWVIENLKGKNNEVRLFKRFLKGIKAYGSEIYVRGFSGYLAEILVIEFGSFLSVLEKADFMLKKKIIDTGKWMKKESEITMKTIKREAEEDKPLIVIDPVDPRRNVAANLSWERFGLFYFSSMQFLEKPSLEFFFPGEKRGNYREELKRKGTHLVTLLFTPPKLVDDLLLPQVEKTAKGLAKALEIEGFKVFGIDYGRNFIFLEVDRVEKPRIEIKRGPLYFTSHGRRFYEKNEKVWIEGKDLMAEKKVGGFIVEVLEEIFKKGQFSAGKNVKEVIKSSDILIDFVPKPLANEAYLFLSREKFNVKRSTS.

ATP is bound by residues Ser-53 and Lys-56. Ser-53 and Lys-56 together coordinate CTP. Residues Asp-65, Asp-67, and Asp-119 each contribute to the Mg(2+) site. The ATP site is built by His-142, Lys-161, and Tyr-170. The CTP site is built by His-142, Lys-161, and Tyr-170.

The protein belongs to the tRNA nucleotidyltransferase/poly(A) polymerase family. Archaeal CCA-adding enzyme subfamily. In terms of assembly, homodimer. The cofactor is Mg(2+).

The catalysed reaction is a tRNA precursor + 2 CTP + ATP = a tRNA with a 3' CCA end + 3 diphosphate. It catalyses the reaction a tRNA with a 3' CCA end + 2 CTP + ATP = a tRNA with a 3' CCACCA end + 3 diphosphate. Functionally, catalyzes the addition and repair of the essential 3'-terminal CCA sequence in tRNAs without using a nucleic acid template. Adds these three nucleotides in the order of C, C, and A to the tRNA nucleotide-73, using CTP and ATP as substrates and producing inorganic pyrophosphate. tRNA 3'-terminal CCA addition is required both for tRNA processing and repair. Also involved in tRNA surveillance by mediating tandem CCA addition to generate a CCACCA at the 3' terminus of unstable tRNAs. While stable tRNAs receive only 3'-terminal CCA, unstable tRNAs are marked with CCACCA and rapidly degraded. In Pyrococcus furiosus (strain ATCC 43587 / DSM 3638 / JCM 8422 / Vc1), this protein is CCA-adding enzyme.